The following is a 299-amino-acid chain: ATP phosphoribosyltransferase (299 aa).

The protein belongs to the ATP phosphoribosyltransferase family. Long subfamily. As to quaternary structure, equilibrium between an active dimeric form, an inactive hexameric form and higher aggregates. Interconversion between the various forms is largely reversible and is influenced by the natural substrates and inhibitors of the enzyme. Mg(2+) is required as a cofactor.

It is found in the cytoplasm. The catalysed reaction is 1-(5-phospho-beta-D-ribosyl)-ATP + diphosphate = 5-phospho-alpha-D-ribose 1-diphosphate + ATP. Its pathway is amino-acid biosynthesis; L-histidine biosynthesis; L-histidine from 5-phospho-alpha-D-ribose 1-diphosphate: step 1/9. Its activity is regulated as follows. Feedback inhibited by histidine. In terms of biological role, catalyzes the condensation of ATP and 5-phosphoribose 1-diphosphate to form N'-(5'-phosphoribosyl)-ATP (PR-ATP). Has a crucial role in the pathway because the rate of histidine biosynthesis seems to be controlled primarily by regulation of HisG enzymatic activity. This chain is ATP phosphoribosyltransferase, found in Salmonella dublin (strain CT_02021853).